Consider the following 344-residue polypeptide: Probable magnesium transporter NIPA9 (344 aa).

At 1-46 (MWESICLTLAATAGNNIGKVLQKKGTIILPPLSLKLKVLRAYAENK) the chain is on the cytoplasmic side. 2 helical membrane-spanning segments follow: residues 47-67 (PWALGFLMDIVGALLMLRALS) and 68-88 (LAPVSVVQPVSGCGLAILSVF). Over 89–98 (SHFYLKEVMN) the chain is Cytoplasmic. A helical membrane pass occupies residues 99 to 119 (VFDWIGITVAGIGTIGVGAGG). Residues 120 to 125 (EEQEAS) lie on the Extracellular side of the membrane. Residues 126–146 (LISVFQLLWLALVVAILFVLL) traverse the membrane as a helical segment. Residues 147 to 166 (NAWLHIFKRQRREQELGEYE) lie on the Cytoplasmic side of the membrane. A helical transmembrane segment spans residues 167 to 187 (VVEEIIYGLESGILFGMASVV). Topologically, residues 188-191 (SKMG) are extracellular. Residues 192 to 212 (FVFVEQGFSTMFIPMCISISI) form a helical membrane-spanning segment. Residues 213–231 (CCSGTGFFYQTRGLKHGRA) are Cytoplasmic-facing. The helical transmembrane segment at 232–252 (IVVSTCAAVASIVTGVVAGMF) threads the bilayer. Topologically, residues 253-265 (ALGEKLPTSPSGR) are extracellular. The chain crosses the membrane as a helical span at residues 266 to 286 (LLLLLGWLLIMLGVVLLVTSS). The Cytoplasmic portion of the chain corresponds to 287–344 (RLIRHLPRSFRRSRQTSLERGFNIRRTTSHTPKDTNPSAVIQAATLHHLLSSPSKDKD).

This sequence belongs to the NIPA (TC 2.A.7) family. Homodimer.

It localises to the cell membrane. The protein resides in the early endosome. Acts as a Mg(2+) transporter. Can also transport other divalent cations such as Fe(2+), Sr(2+), Ba(2+), Mn(2+) and Co(2+) but to a much less extent than Mg(2+). In Arabidopsis thaliana (Mouse-ear cress), this protein is Probable magnesium transporter NIPA9.